Consider the following 313-residue polypeptide: Porphobilinogen deaminase (313 aa).

Cys241 carries the post-translational modification S-(dipyrrolylmethanemethyl)cysteine.

It belongs to the HMBS family. In terms of assembly, monomer. Requires dipyrromethane as cofactor.

It catalyses the reaction 4 porphobilinogen + H2O = hydroxymethylbilane + 4 NH4(+). It participates in porphyrin-containing compound metabolism; protoporphyrin-IX biosynthesis; coproporphyrinogen-III from 5-aminolevulinate: step 2/4. It functions in the pathway porphyrin-containing compound metabolism; chlorophyll biosynthesis. Functionally, tetrapolymerization of the monopyrrole PBG into the hydroxymethylbilane pre-uroporphyrinogen in several discrete steps. The protein is Porphobilinogen deaminase of Chlorobium phaeovibrioides (strain DSM 265 / 1930) (Prosthecochloris vibrioformis (strain DSM 265)).